A 146-amino-acid chain; its full sequence is Probable glycine cleavage system H protein 3 (146 aa).

The 83-residue stretch at 29–111 folds into the Lipoyl-binding domain; sequence VVSVGMTDLG…PYGSWIIKVS (83 aa). An N6-lipoyllysine modification is found at lysine 71.

Belongs to the GcvH family. In terms of assembly, the glycine cleavage system is composed of four proteins: P, T, L and H. (R)-lipoate serves as cofactor.

Its function is as follows. The glycine cleavage system catalyzes the degradation of glycine. The H protein shuttles the methylamine group of glycine from the P protein to the T protein. The protein is Probable glycine cleavage system H protein 3 of Sulfolobus acidocaldarius (strain ATCC 33909 / DSM 639 / JCM 8929 / NBRC 15157 / NCIMB 11770).